The primary structure comprises 77 residues: Small ribosomal subunit protein uS17c (77 aa).

Belongs to the universal ribosomal protein uS17 family. As to quaternary structure, part of the 30S ribosomal subunit.

Its subcellular location is the plastid. The protein resides in the chloroplast. In terms of biological role, one of the primary rRNA binding proteins, it binds specifically to the 5'-end of 16S ribosomal RNA. The sequence is that of Small ribosomal subunit protein uS17c (rps17) from Cyanidium caldarium (Red alga).